A 132-amino-acid polypeptide reads, in one-letter code: Large ribosomal subunit protein uL14 (132 aa).

This sequence belongs to the universal ribosomal protein uL14 family. Part of the 50S ribosomal subunit. Forms a cluster with proteins L3 and L24e, part of which may contact the 16S rRNA in 2 intersubunit bridges.

Functionally, binds to 23S rRNA. Forms part of two intersubunit bridges in the 70S ribosome. The polypeptide is Large ribosomal subunit protein uL14 (Methanosarcina mazei (strain ATCC BAA-159 / DSM 3647 / Goe1 / Go1 / JCM 11833 / OCM 88) (Methanosarcina frisia)).